A 339-amino-acid polypeptide reads, in one-letter code: Malate/(S)-sulfolactate dehydrogenase (339 aa).

It belongs to the LDH2/MDH2 oxidoreductase family. As to quaternary structure, homodimer.

Its subcellular location is the cytoplasm. It catalyses the reaction (S)-malate + NAD(+) = oxaloacetate + NADH + H(+). It carries out the reaction (S)-malate + NADP(+) = oxaloacetate + NADPH + H(+). The enzyme catalyses (2S)-3-sulfolactate + NAD(+) = 3-sulfopyruvate + NADH + H(+). Its function is as follows. Acts on oxaloacetate, sulfopyruvate but not on pyruvate. Has a higher selectivity for the coenzyme NADH than for NADPH. This chain is Malate/(S)-sulfolactate dehydrogenase (mdh), found in Methanothermus fervidus (strain ATCC 43054 / DSM 2088 / JCM 10308 / V24 S).